Consider the following 145-residue polypeptide: uncharacterized protein (145 aa).

It belongs to the asfivirus K145R family.

It is found in the virion. This is an uncharacterized protein from Ornithodoros (relapsing fever ticks).